The following is a 312-amino-acid chain: tRNA uridine(34) hydroxylase (312 aa).

The region spanning arginine 130–leucine 225 is the Rhodanese domain. The Cysteine persulfide intermediate role is filled by cysteine 185.

This sequence belongs to the TrhO family.

The catalysed reaction is uridine(34) in tRNA + AH2 + O2 = 5-hydroxyuridine(34) in tRNA + A + H2O. In terms of biological role, catalyzes oxygen-dependent 5-hydroxyuridine (ho5U) modification at position 34 in tRNAs. This is tRNA uridine(34) hydroxylase from Corynebacterium glutamicum (strain R).